The primary structure comprises 324 residues: COP9 signalosome complex subunit 6 (324 aa).

In terms of domain architecture, MPN spans 38–171; it reads VALHPLVILN…VSVFESVIDI (134 aa).

This sequence belongs to the peptidase M67A family. CSN6 subfamily. As to quaternary structure, component of the CSN complex, composed of COPS1/GPS1, COPS2, COPS3, COPS4, COPS5, COPS6, COPS7 (COPS7A or COPS7B), COPS8 and COPS9. In the complex, it probably interacts directly with COPS2, COPS4, COPS5, COPS7 (COPS7A or COPS7B) and COPS9. Interacts with the translation initiation factor EIF3S6. Interacts weakly with RBX1. Directly interacts with COP1 and 14-3-3 protein sigma/SFN. Interacts with ERCC6.

It localises to the cytoplasm. The protein resides in the nucleus. Functionally, component of the COP9 signalosome complex (CSN), a complex involved in various cellular and developmental processes. The CSN complex is an essential regulator of the ubiquitin (Ubl) conjugation pathway by mediating the deneddylation of the cullin subunits of SCF-type E3 ligase complexes, leading to decrease the Ubl ligase activity of SCF-type complexes such as SCF, CSA or DDB2. The complex is also involved in phosphorylation of p53/TP53, c-jun/JUN, IkappaBalpha/NFKBIA, ITPK1 and IRF8, possibly via its association with CK2 and PKD kinases. CSN-dependent phosphorylation of TP53 and JUN promotes and protects degradation by the Ubl system, respectively. Has some glucocorticoid receptor-responsive activity. Stabilizes COP1 through reducing COP1 auto-ubiquitination and decelerating COP1 turnover rate, hence regulates the ubiquitination of COP1 targets, including SFN. The protein is COP9 signalosome complex subunit 6 (Cops6) of Mus musculus (Mouse).